Reading from the N-terminus, the 404-residue chain is Imidazolonepropionase (404 aa).

Positions 73 and 75 each coordinate Fe(3+). Zn(2+)-binding residues include His73 and His75. 4-imidazolone-5-propanoate is bound by residues Arg82, Tyr145, and His178. Tyr145 contacts N-formimidoyl-L-glutamate. Fe(3+) is bound at residue His243. His243 contacts Zn(2+). Gln246 is a 4-imidazolone-5-propanoate binding site. A Fe(3+)-binding site is contributed by Asp318. Asp318 lines the Zn(2+) pocket. 2 residues coordinate N-formimidoyl-L-glutamate: Asn320 and Gly322. Ser323 serves as a coordination point for 4-imidazolone-5-propanoate.

This sequence belongs to the metallo-dependent hydrolases superfamily. HutI family. Requires Zn(2+) as cofactor. Fe(3+) is required as a cofactor.

It localises to the cytoplasm. It catalyses the reaction 4-imidazolone-5-propanoate + H2O = N-formimidoyl-L-glutamate. The protein operates within amino-acid degradation; L-histidine degradation into L-glutamate; N-formimidoyl-L-glutamate from L-histidine: step 3/3. Its function is as follows. Catalyzes the hydrolytic cleavage of the carbon-nitrogen bond in imidazolone-5-propanoate to yield N-formimidoyl-L-glutamate. It is the third step in the universal histidine degradation pathway. This chain is Imidazolonepropionase, found in Bradyrhizobium sp. (strain BTAi1 / ATCC BAA-1182).